Reading from the N-terminus, the 70-residue chain is DNA-directed RNA polymerase subunit omega (70 aa).

It belongs to the RNA polymerase subunit omega family. The RNAP catalytic core consists of 2 alpha, 1 beta, 1 beta' and 1 omega subunit. When a sigma factor is associated with the core the holoenzyme is formed, which can initiate transcription.

It carries out the reaction RNA(n) + a ribonucleoside 5'-triphosphate = RNA(n+1) + diphosphate. Functionally, promotes RNA polymerase assembly. Latches the N- and C-terminal regions of the beta' subunit thereby facilitating its interaction with the beta and alpha subunits. This Bacillus mycoides (strain KBAB4) (Bacillus weihenstephanensis) protein is DNA-directed RNA polymerase subunit omega.